A 368-amino-acid polypeptide reads, in one-letter code: tRNA-specific 2-thiouridylase MnmA (368 aa).

ATP is bound by residues 12–19 and M38; that span reads AMSGGVDS. The interval 98-100 is interaction with target base in tRNA; it reads NPD. C103 acts as the Nucleophile in catalysis. A disulfide bridge connects residues C103 and C200. G128 contributes to the ATP binding site. The tract at residues 150 to 152 is interaction with tRNA; sequence KDQ. C200 functions as the Cysteine persulfide intermediate in the catalytic mechanism. An interaction with tRNA region spans residues 312–313; that stretch reads RY.

Belongs to the MnmA/TRMU family. Interacts with TusE.

The protein resides in the cytoplasm. It catalyses the reaction S-sulfanyl-L-cysteinyl-[protein] + uridine(34) in tRNA + AH2 + ATP = 2-thiouridine(34) in tRNA + L-cysteinyl-[protein] + A + AMP + diphosphate + H(+). Functionally, catalyzes the 2-thiolation of uridine at the wobble position (U34) of tRNA(Lys), tRNA(Glu) and tRNA(Gln), leading to the formation of s(2)U34, the first step of tRNA-mnm(5)s(2)U34 synthesis. Sulfur is provided by IscS, via a sulfur-relay system. Binds ATP and its substrate tRNAs. This chain is tRNA-specific 2-thiouridylase MnmA, found in Buchnera aphidicola subsp. Acyrthosiphon pisum (strain APS) (Acyrthosiphon pisum symbiotic bacterium).